Reading from the N-terminus, the 401-residue chain is Splicing factor 45 (401 aa).

Ser-2 is modified (N-acetylserine). At Ser-2 the chain carries Phosphoserine. Residue Lys-15 forms a Glycyl lysine isopeptide (Lys-Gly) (interchain with G-Cter in SUMO2) linkage. Lys-21 carries the post-translational modification N6-acetyllysine. Residues Lys-24 and Lys-33 each participate in a glycyl lysine isopeptide (Lys-Gly) (interchain with G-Cter in SUMO2) cross-link. Lys-41 bears the N6-acetyllysine; alternate mark. Lys-41 is covalently cross-linked (Glycyl lysine isopeptide (Lys-Gly) (interchain with G-Cter in SUMO2); alternate). Positions 57-68 are enriched in basic and acidic residues; that stretch reads LKRGGSSDDRQI. 2 disordered regions span residues 57 to 84 and 114 to 233; these read LKRG…DPVP and RQRE…FLAN. Residue Lys-58 forms a Glycyl lysine isopeptide (Lys-Gly) (interchain with G-Cter in SUMO2) linkage. Thr-71 carries the post-translational modification Phosphothreonine. Basic and acidic residues predominate over residues 114-153; the sequence is RQREERQRQRELERQKEIEEREKRRKDRHEASGFARRPDP. Phosphoserine occurs at positions 155 and 169. Positions 182–200 are enriched in basic and acidic residues; sequence VEKDKELPRDFPYEEDSRP. Ser-222 is subject to Phosphoserine. Positions 235–283 constitute a G-patch domain; the sequence is GGTVAHKIMQKYGFREGQGLGKHEQGLSTALSVEKTSKRGGKIIVGDAT. The residue at position 237 (Thr-237) is a Phosphothreonine. Lys-256 participates in a covalent cross-link: Glycyl lysine isopeptide (Lys-Gly) (interchain with G-Cter in SUMO2). Residue Ser-266 is modified to Phosphoserine. A Glycyl lysine isopeptide (Lys-Gly) (interchain with G-Cter in SUMO2) cross-link involves residue Lys-276. Residues Ser-291 and Ser-293 each carry the phosphoserine modification. Positions 306–385 constitute an RRM domain; sequence VVLLRNMVGA…YFGGRVVKAC (80 aa).

Binds SXL. Associates with the spliceosome. Interacts with SF3B1, SF1 and U2AF2.

It is found in the nucleus. In terms of biological role, splice factor that binds to the single-stranded 3'AG at the exon/intron border and promotes its utilization in the second catalytic step. Involved in the regulation of alternative splicing and the utilization of cryptic splice sites. Promotes the utilization of a cryptic splice site created by the beta-110 mutation in the HBB gene. The resulting frameshift leads to sickle cell anemia. The polypeptide is Splicing factor 45 (RBM17) (Homo sapiens (Human)).